The sequence spans 346 residues: N-acetyl-gamma-glutamyl-phosphate reductase (346 aa).

The active site involves Cys-149.

The protein belongs to the NAGSA dehydrogenase family. Type 1 subfamily.

The protein localises to the cytoplasm. The catalysed reaction is N-acetyl-L-glutamate 5-semialdehyde + phosphate + NADP(+) = N-acetyl-L-glutamyl 5-phosphate + NADPH + H(+). Its pathway is amino-acid biosynthesis; L-arginine biosynthesis; N(2)-acetyl-L-ornithine from L-glutamate: step 3/4. Its function is as follows. Catalyzes the NADPH-dependent reduction of N-acetyl-5-glutamyl phosphate to yield N-acetyl-L-glutamate 5-semialdehyde. This is N-acetyl-gamma-glutamyl-phosphate reductase from Saccharophagus degradans (strain 2-40 / ATCC 43961 / DSM 17024).